The primary structure comprises 325 residues: Biotin synthase (325 aa).

The Radical SAM core domain maps to 46–270; sequence NNSNNIDLCS…IAICKLILPN (225 aa). Positions 64, 68, and 71 each coordinate [4Fe-4S] cluster. The [2Fe-2S] cluster site is built by Ser-107, Cys-139, Cys-198, and Arg-274.

Belongs to the radical SAM superfamily. Biotin synthase family. In terms of assembly, homodimer. Requires [4Fe-4S] cluster as cofactor. [2Fe-2S] cluster serves as cofactor.

The catalysed reaction is (4R,5S)-dethiobiotin + (sulfur carrier)-SH + 2 reduced [2Fe-2S]-[ferredoxin] + 2 S-adenosyl-L-methionine = (sulfur carrier)-H + biotin + 2 5'-deoxyadenosine + 2 L-methionine + 2 oxidized [2Fe-2S]-[ferredoxin]. The protein operates within cofactor biosynthesis; biotin biosynthesis; biotin from 7,8-diaminononanoate: step 2/2. Functionally, catalyzes the conversion of dethiobiotin (DTB) to biotin by the insertion of a sulfur atom into dethiobiotin via a radical-based mechanism. The sequence is that of Biotin synthase from Methanococcus aeolicus (strain ATCC BAA-1280 / DSM 17508 / OCM 812 / Nankai-3).